The primary structure comprises 370 residues: Immunoglobulin superfamily member 5 (370 aa).

Residues 1 to 24 (MEGSWRDVLAVLVILAQLTASGSS) form the signal peptide. Ig-like V-type domains are found at residues 25–125 (YQII…LSVQ) and 128–215 (GTLN…KSLT). Residues 25 to 239 (YQIIEGPQNV…EEGPALPTWA (215 aa)) are Extracellular-facing. Residues asparagine 33 and asparagine 45 are each glycosylated (N-linked (GlcNAc...) asparagine). A disulfide bridge links cysteine 46 with cysteine 109. N-linked (GlcNAc...) asparagine glycosylation is found at asparagine 146, asparagine 196, and asparagine 217. Cysteines 149 and 201 form a disulfide. A helical membrane pass occupies residues 240-260 (IILLAVAFSLLLILIIVLIII). Topologically, residues 261 to 370 (FCCCCASRRE…PQKVRNVTLV (110 aa)) are cytoplasmic. A disordered region spans residues 284–359 (ANMRTNKADP…THPRVSFDIA (76 aa)). Over residues 289–301 (NKADPETKLKGGK) the composition is skewed to basic and acidic residues.

Belongs to the immunoglobulin superfamily. Interacts with MAGI1 at tight junctions, forms a tripartite complex with NPHS1. Interacts with LNX1 isoform 2 via its PDZ 2 domain, it may also interact with other isoforms containing this domain. N-glycosylated. As to expression, localized to kidney glomeruli and small intestinal epithelial cells. In kidney glomeruli, it is localized at slit diaphragm. Also found in spermatogonia, gonocytes, hematopoietic stem cells and Sertoli cells.

The protein localises to the apical cell membrane. Its subcellular location is the cell junction. It is found in the tight junction. Provides, together with MAGI1, an adhesion machinery at tight junctions, which may regulate the permeability of kidney glomerulus and small intestinal epithelial cells. Mediates calcium-independent homophilic cell adhesion. In testis, it may function as a cell adhesion molecule rather than a tight-junction protein. It may participate in the adhesion between spermatogonia-spermatogonia, spermatogonia-Sertoli cells, and Sertoli cells-Sertoli cells. This is Immunoglobulin superfamily member 5 (Igsf5) from Mus musculus (Mouse).